We begin with the raw amino-acid sequence, 392 residues long: Tryptophan synthase beta chain (392 aa).

Lys84 is subject to N6-(pyridoxal phosphate)lysine.

The protein belongs to the TrpB family. Tetramer of two alpha and two beta chains. Requires pyridoxal 5'-phosphate as cofactor.

It carries out the reaction (1S,2R)-1-C-(indol-3-yl)glycerol 3-phosphate + L-serine = D-glyceraldehyde 3-phosphate + L-tryptophan + H2O. The protein operates within amino-acid biosynthesis; L-tryptophan biosynthesis; L-tryptophan from chorismate: step 5/5. Its function is as follows. The beta subunit is responsible for the synthesis of L-tryptophan from indole and L-serine. The sequence is that of Tryptophan synthase beta chain from Campylobacter jejuni subsp. jejuni serotype O:6 (strain 81116 / NCTC 11828).